We begin with the raw amino-acid sequence, 337 residues long: tRNA-cytidine(32) 2-sulfurtransferase (337 aa).

A PP-loop motif motif is present at residues 71-76 (SGGKDS). Positions 146, 149, and 237 each coordinate [4Fe-4S] cluster.

Belongs to the TtcA family. As to quaternary structure, homodimer. The cofactor is Mg(2+). It depends on [4Fe-4S] cluster as a cofactor.

The protein resides in the cytoplasm. The enzyme catalyses cytidine(32) in tRNA + S-sulfanyl-L-cysteinyl-[cysteine desulfurase] + AH2 + ATP = 2-thiocytidine(32) in tRNA + L-cysteinyl-[cysteine desulfurase] + A + AMP + diphosphate + H(+). It participates in tRNA modification. Catalyzes the ATP-dependent 2-thiolation of cytidine in position 32 of tRNA, to form 2-thiocytidine (s(2)C32). The sulfur atoms are provided by the cysteine/cysteine desulfurase (IscS) system. The chain is tRNA-cytidine(32) 2-sulfurtransferase from Burkholderia vietnamiensis (strain G4 / LMG 22486) (Burkholderia cepacia (strain R1808)).